The chain runs to 308 residues: GTPase Era (308 aa).

Positions 7-181 (RCGWVALIGP…LRLIVGYMPE (175 aa)) constitute an Era-type G domain. Positions 15 to 22 (GPPNAGKS) are G1. Residue 15–22 (GPPNAGKS) participates in GTP binding. Residues 41-45 (QTTRN) form a G2 region. A G3 region spans residues 62 to 65 (DTPG). Residues 62–66 (DTPGI) and 130–133 (NKID) each bind GTP. A G4 region spans residues 130-133 (NKID). The segment at 160–162 (ASA) is G5. The KH type-2 domain occupies 212 to 290 (LRQELPYSTA…HLELWVKVRE (79 aa)).

The protein belongs to the TRAFAC class TrmE-Era-EngA-EngB-Septin-like GTPase superfamily. Era GTPase family. Monomer.

Its subcellular location is the cytoplasm. It localises to the cell inner membrane. Functionally, an essential GTPase that binds both GDP and GTP, with rapid nucleotide exchange. Plays a role in 16S rRNA processing and 30S ribosomal subunit biogenesis and possibly also in cell cycle regulation and energy metabolism. The polypeptide is GTPase Era (Nitratidesulfovibrio vulgaris (strain DP4) (Desulfovibrio vulgaris)).